A 135-amino-acid chain; its full sequence is Galectin-1 (135 aa).

A2 carries the post-translational modification N-acetylalanine. The region spanning 4–135 (GLVASNLNLK…DFKIKCVAFD (132 aa)) is the Galectin domain. N6-acetyllysine is present on residues K13 and K29. The residue at position 30 (S30) is a Phosphoserine. Residues 45 to 49 (HFNPR), H53, N62, and 69 to 72 (WGTE) each bind a beta-D-galactoside. K108 bears the N6-acetyllysine; alternate mark. An N6-succinyllysine; alternate modification is found at K108. K128 carries the post-translational modification N6-acetyllysine.

Homodimer. Binds LGALS3BP. Interacts with CD2, CD3, CD4, CD6, CD7, CD43, ALCAM and CD45. Interacts with laminin (via poly-N-acetyllactosamine). Interacts with SUSD2.

The protein resides in the secreted. It is found in the extracellular space. Its subcellular location is the extracellular matrix. Functionally, lectin that binds beta-galactoside and a wide array of complex carbohydrates. Plays a role in regulating apoptosis, cell proliferation and cell differentiation. Inhibits CD45 protein phosphatase activity and therefore the dephosphorylation of Lyn kinase. Strong inducer of T-cell apoptosis. The polypeptide is Galectin-1 (LGALS1) (Pongo abelii (Sumatran orangutan)).